The chain runs to 424 residues: UDP-N-acetylglucosamine 1-carboxyvinyltransferase (424 aa).

22-23 serves as a coordination point for phosphoenolpyruvate; sequence KN. Residue Arg93 coordinates UDP-N-acetyl-alpha-D-glucosamine. Residue Cys117 is the Proton donor of the active site. Cys117 carries the post-translational modification 2-(S-cysteinyl)pyruvic acid O-phosphothioketal. Residues 122-126, Asp307, and Val329 contribute to the UDP-N-acetyl-alpha-D-glucosamine site; that span reads RPIDL.

The protein belongs to the EPSP synthase family. MurA subfamily.

It localises to the cytoplasm. The catalysed reaction is phosphoenolpyruvate + UDP-N-acetyl-alpha-D-glucosamine = UDP-N-acetyl-3-O-(1-carboxyvinyl)-alpha-D-glucosamine + phosphate. The protein operates within cell wall biogenesis; peptidoglycan biosynthesis. Its function is as follows. Cell wall formation. Adds enolpyruvyl to UDP-N-acetylglucosamine. This Chlorobium luteolum (strain DSM 273 / BCRC 81028 / 2530) (Pelodictyon luteolum) protein is UDP-N-acetylglucosamine 1-carboxyvinyltransferase.